Reading from the N-terminus, the 169-residue chain is Acetolactate synthase small subunit (169 aa).

One can recognise an ACT domain in the interval 8–85; sequence TLSVLVEDTP…KVVEQEADNS (78 aa).

It belongs to the acetolactate synthase small subunit family. Dimer of large and small chains.

The catalysed reaction is 2 pyruvate + H(+) = (2S)-2-acetolactate + CO2. The protein operates within amino-acid biosynthesis; L-isoleucine biosynthesis; L-isoleucine from 2-oxobutanoate: step 1/4. It participates in amino-acid biosynthesis; L-valine biosynthesis; L-valine from pyruvate: step 1/4. The polypeptide is Acetolactate synthase small subunit (ilvH) (Mycobacterium leprae (strain TN)).